We begin with the raw amino-acid sequence, 716 residues long: Fatty acid oxidation complex subunit alpha (716 aa).

The interval 1 to 188 (MIYQSPTIQV…KVGAIDAVVA (188 aa)) is enoyl-CoA hydratase/isomerase. Asp295 lines the substrate pocket. The tract at residues 310–716 (KDIKHAAVLG…SNNGSYYPKA (407 aa)) is 3-hydroxyacyl-CoA dehydrogenase. Residues Met323, Asp342, 399-401 (VVE), Lys406, and Ser428 contribute to the NAD(+) site. His449 serves as the catalytic For 3-hydroxyacyl-CoA dehydrogenase activity. Position 452 (Asn452) interacts with NAD(+). Asn499 and Tyr659 together coordinate substrate.

This sequence in the N-terminal section; belongs to the enoyl-CoA hydratase/isomerase family. In the C-terminal section; belongs to the 3-hydroxyacyl-CoA dehydrogenase family. Heterotetramer of two alpha chains (FadB) and two beta chains (FadA).

It catalyses the reaction a (3S)-3-hydroxyacyl-CoA + NAD(+) = a 3-oxoacyl-CoA + NADH + H(+). It carries out the reaction a (3S)-3-hydroxyacyl-CoA = a (2E)-enoyl-CoA + H2O. The enzyme catalyses a 4-saturated-(3S)-3-hydroxyacyl-CoA = a (3E)-enoyl-CoA + H2O. The catalysed reaction is (3S)-3-hydroxybutanoyl-CoA = (3R)-3-hydroxybutanoyl-CoA. It catalyses the reaction a (3Z)-enoyl-CoA = a 4-saturated (2E)-enoyl-CoA. It carries out the reaction a (3E)-enoyl-CoA = a 4-saturated (2E)-enoyl-CoA. Its pathway is lipid metabolism; fatty acid beta-oxidation. Functionally, involved in the aerobic and anaerobic degradation of long-chain fatty acids via beta-oxidation cycle. Catalyzes the formation of 3-oxoacyl-CoA from enoyl-CoA via L-3-hydroxyacyl-CoA. It can also use D-3-hydroxyacyl-CoA and cis-3-enoyl-CoA as substrate. This Shewanella amazonensis (strain ATCC BAA-1098 / SB2B) protein is Fatty acid oxidation complex subunit alpha.